The primary structure comprises 203 residues: Recombination protein RecR (203 aa).

The C4-type zinc-finger motif lies at 57 to 72 (CARCNTFSETELCVLC). One can recognise a Toprim domain in the interval 80 to 175 (DVLCVVEMPA…SVSRIARGLP (96 aa)).

It belongs to the RecR family.

In terms of biological role, may play a role in DNA repair. It seems to be involved in an RecBC-independent recombinational process of DNA repair. It may act with RecF and RecO. The sequence is that of Recombination protein RecR from Laribacter hongkongensis (strain HLHK9).